We begin with the raw amino-acid sequence, 330 residues long: Carbonic anhydrase (330 aa).

The chloroplast transit peptide-like stretch occupies residues 1–109 (MSAASAFAMN…AATRIDQITA (109 aa)).

It belongs to the beta-class carbonic anhydrase family.

The protein localises to the cytoplasm. It carries out the reaction hydrogencarbonate + H(+) = CO2 + H2O. Reversible hydration of carbon dioxide. In Flaveria bidentis (Coastal plain yellowtops), this protein is Carbonic anhydrase.